A 380-amino-acid polypeptide reads, in one-letter code: DNA-directed RNA polymerase subunit Rpo1C (380 aa).

This sequence belongs to the RNA polymerase beta' chain family. In terms of assembly, part of the RNA polymerase complex.

The protein localises to the cytoplasm. It carries out the reaction RNA(n) + a ribonucleoside 5'-triphosphate = RNA(n+1) + diphosphate. Its function is as follows. DNA-dependent RNA polymerase (RNAP) catalyzes the transcription of DNA into RNA using the four ribonucleoside triphosphates as substrates. Forms part of the jaw domain. This is DNA-directed RNA polymerase subunit Rpo1C from Archaeoglobus fulgidus (strain ATCC 49558 / DSM 4304 / JCM 9628 / NBRC 100126 / VC-16).